The sequence spans 507 residues: Zinc finger protein Aiolos (507 aa).

Residues 1–85 form a disordered region; the sequence is MEDIQPTVEL…PMGDAEESEM (85 aa). Phosphothreonine is present on threonine 20. A phosphoserine mark is found at serine 22 and serine 42. 2 stretches are compositionally biased toward basic and acidic residues: residues 33-46 and 56-72; these read KPHEIENVDSREAP and DSMKVKDEYSDRDENIM. Residues lysine 61, lysine 73, and lysine 100 each participate in a glycyl lysine isopeptide (Lys-Gly) (interchain with G-Cter in SUMO2) cross-link. C2H2-type zinc fingers lie at residues 117-139, 145-167, and 173-195; these read MNCDVCGLSCISFNVLMVHKRSH, FQCNQCGASFTQKGNLLRHIKLH, and FKCHLCNYACQRRDALTGHLRTH. The C2H2-type 4; atypical zinc finger occupies 201–223; the sequence is YKCEFCGRSYKQRSSLEEHKERC. Lysine 244 is covalently cross-linked (Glycyl lysine isopeptide (Lys-Gly) (interchain with G-Cter in SUMO2)). Threonine 325 bears the Phosphothreonine mark. Positions 370-396 are disordered; that stretch reads LPSERGLSPNNSAQDSTDTDSNHEDRQ. Serine 377 is subject to Phosphoserine. A C2H2-type 5 zinc finger spans residues 450–472; that stretch reads FRCDHCHVLFLDYVMFTIHMGCH. The tract at residues 450-502 is mediates homodimerization and heterodimerization; it reads FRCDHCHVLFLDYVMFTIHMGCHGFRDPFECNMCGYRSHDRYEFSSHIARGEH. Residues 478–502 form a C2H2-type 6; atypical zinc finger; the sequence is FECNMCGYRSHDRYEFSSHIARGEH.

Belongs to the Ikaros C2H2-type zinc-finger protein family. As to quaternary structure, homodimer. Heterodimer with other IKAROS family members. Interacts with IKZF4 and IKZF5. Interacts with HRAS. Interacts with FOXP3; this interaction may be required for silencing target genes and regulating the suppressive activity of FOXP3-positive regulatory T-cells (Treg). Interacts with BCL21L isoform Bcl-X(L); this interaction blocks the anti-apoptotic role of BCL21L. Associates with histone deacetylase complexes containing HDAC1, MTA2 and SIN3A. Interacts with IKZF1. As to expression, expression is restricted to lymphoid tissues. Expressed at highest levels in spleen and at lower levels in the thymus and bone marrow. First detected in more committed lymphoid progenitors and strongly up-regulated as these differentiate into pre-T and pre-B cell precursors.

It localises to the nucleus. The protein localises to the cytoplasm. In terms of biological role, transcription factor that plays an important role in the regulation of lymphocyte differentiation. Binds to GGGAA. Plays an essential role in regulation of B-cell differentiation, proliferation and maturation to an effector state. Involved in regulating BCL2 expression and controlling apoptosis in T-cells in an IL2-dependent manner. The polypeptide is Zinc finger protein Aiolos (Ikzf3) (Mus musculus (Mouse)).